The following is a 129-amino-acid chain: Small ribosomal subunit protein uS11 (129 aa).

The protein belongs to the universal ribosomal protein uS11 family. As to quaternary structure, part of the 30S ribosomal subunit. Interacts with proteins S7 and S18. Binds to IF-3.

Its function is as follows. Located on the platform of the 30S subunit, it bridges several disparate RNA helices of the 16S rRNA. Forms part of the Shine-Dalgarno cleft in the 70S ribosome. This Methylobacillus flagellatus (strain ATCC 51484 / DSM 6875 / VKM B-1610 / KT) protein is Small ribosomal subunit protein uS11.